Here is a 292-residue protein sequence, read N- to C-terminus: Homoserine kinase (292 aa).

80–90 contributes to the ATP binding site; sequence PLARGLGSSSS.

The protein belongs to the GHMP kinase family. Homoserine kinase subfamily.

It is found in the cytoplasm. It catalyses the reaction L-homoserine + ATP = O-phospho-L-homoserine + ADP + H(+). Its pathway is amino-acid biosynthesis; L-threonine biosynthesis; L-threonine from L-aspartate: step 4/5. Catalyzes the ATP-dependent phosphorylation of L-homoserine to L-homoserine phosphate. The polypeptide is Homoserine kinase (Leuconostoc mesenteroides subsp. mesenteroides (strain ATCC 8293 / DSM 20343 / BCRC 11652 / CCM 1803 / JCM 6124 / NCDO 523 / NBRC 100496 / NCIMB 8023 / NCTC 12954 / NRRL B-1118 / 37Y)).